The primary structure comprises 525 residues: Sterol O-acyltransferase 2 (525 aa).

2 disordered regions span residues M1 to T34 and Q77 to P97. Residues M1–F119 are Cytoplasmic-facing. A compositionally biased stretch (basic and acidic residues) spans R9 to R23. Cholesterol is bound at residue H118. A helical membrane pass occupies residues R120–D141. At F142–Q161 the chain is on the lumenal side. A helical transmembrane segment spans residues L162 to W187. The Cytoplasmic segment spans residues A188–G199. The helical transmembrane segment at A200–V223 threads the bilayer. Residues R224–S231 are Lumenal-facing. A helical membrane pass occupies residues R232–P255. At G256–R296 the chain is on the cytoplasmic side. C280 carries the post-translational modification Cysteine sulfenic acid (-SOH); alternate. C280 participates in a covalent cross-link: Glycyl cysteine thioester (Cys-Gly) (interchain with G-Cter in ubiquitin); alternate. Residues W297 to M329 form a helical membrane-spanning segment. Residues S330–A346 are Lumenal-facing. Residues T347–M372 traverse the membrane as a helical segment. At L373–R420 the chain is on the cytoplasmic side. An FYXDWWN motif motif is present at residues F380 to N386. 6 residues coordinate an acyl-CoA: N392, R395, N398, H402, Y410, and S433. A helical transmembrane segment spans residues A421–L445. H437 is an active-site residue. Residues G446–V451 are Lumenal-facing. Residues M452–M467 form a helical membrane-spanning segment. Residues N468–G473 are Cytoplasmic-facing. A helical membrane pass occupies residues P474–C505. Over P506–P525 the chain is Lumenal.

The protein belongs to the membrane-bound acyltransferase family. Sterol o-acyltransferase subfamily. In terms of assembly, may form homo- or heterodimers. Interacts with INSIG1; the interaction is direct and promotes association with AMFR/gp78. In terms of processing, polyubiquitinated by AMFR/gp78 at Cys-280, leading to its degradation when the lipid levels are low. Association with AMFR/gp78 is mediated via interaction with INSIG1. High concentration of cholesterol and fatty acid results in Cys-280 oxidation, preventing ubiquitination at the same site, resulting in protein stabilization. Oxidized at Cys-280: high concentration of cholesterol and fatty acid induce reactive oxygen species, which oxidizes Cys-280, preventing ubiquitination at the same site, and resulting in protein stabilization.

Its subcellular location is the endoplasmic reticulum membrane. The enzyme catalyses a sterol + a long-chain fatty acyl-CoA = a long-chain 3-hydroxysterol ester + CoA. It carries out the reaction cholesterol + an acyl-CoA = a cholesterol ester + CoA. It catalyses the reaction cholesterol + (9Z)-octadecenoyl-CoA = cholesteryl (9Z-octadecenoate) + CoA. The catalysed reaction is (5Z,8Z,11Z,14Z,17Z)-eicosapentaenoyl-CoA + cholesterol = (5Z,8Z,11Z,14Z,17Z-eicosapentaenoyl)-cholesterol + CoA. The enzyme catalyses (9Z,12Z,15Z)-octadecatrienoyl-CoA + cholesterol = (9Z,12Z,15Z-octadecatrienoyl)-cholesterol + CoA. It carries out the reaction (5Z,8Z,11Z,14Z)-eicosatetraenoyl-CoA + cholesterol = cholesteryl (5Z,8Z,11Z,14Z)-eicosatetraenoate + CoA. Catalyzes the formation of fatty acid-cholesterol esters, which are less soluble in membranes than cholesterol. Plays a role in lipoprotein assembly and dietary cholesterol absorption. Utilizes oleoyl-CoA ((9Z)-octadecenoyl-CoA) and linolenoyl-CoA ((9Z,12Z,15Z)-octadecatrienoyl-CoA) as substrates. May provide cholesteryl esters for lipoprotein secretion from hepatocytes and intestinal mucosa. The protein is Sterol O-acyltransferase 2 of Mus musculus (Mouse).